The primary structure comprises 658 residues: Carnitine O-palmitoyltransferase 2, mitochondrial (658 aa).

The N-terminal 25 residues, 1-25 (MMPRLLLRDWPRCPSLVLGAPSRPL), are a transit peptide targeting the mitochondrion. Residues 26–178 (SAVSGPAEYL…GLLEPEVFHL (153 aa)) are Mitochondrial matrix-facing. N6-succinyllysine is present on Lys69. Lys79 carries the post-translational modification N6-acetyllysine. N6-succinyllysine is present on Lys85. An intramembrane region (note=Mitochondrial inner membrane) is located at residues 179–208 (NPARSDTDAFKRLIRFVPSSLSWYGAYLVN). Over 209-658 (AYPLDMSQYF…DALEGKAIKT (450 aa)) the chain is Mitochondrial matrix. N6-acetyllysine; alternate is present on Lys239. Residue Lys239 is modified to N6-succinyllysine; alternate. Lys305 bears the N6-acetyllysine mark. His372 (proton acceptor) is an active-site residue. N6-acetyllysine; alternate is present on Lys418. Lys418 bears the N6-succinyllysine; alternate mark. N6-succinyllysine occurs at positions 424 and 439. A CoA-binding site is contributed by 452–464 (GKEFLKKKKLSPD). (R)-carnitine-binding residues include Tyr486, Ser488, and Thr499. 2 positions are modified to N6-acetyllysine; alternate: Lys510 and Lys544. Residues Lys510 and Lys544 each carry the N6-succinyllysine; alternate modification.

This sequence belongs to the carnitine/choline acetyltransferase family.

It localises to the mitochondrion inner membrane. The enzyme catalyses (R)-carnitine + hexadecanoyl-CoA = O-hexadecanoyl-(R)-carnitine + CoA. It catalyses the reaction octanoyl-CoA + (R)-carnitine = O-octanoyl-(R)-carnitine + CoA. The catalysed reaction is decanoyl-CoA + (R)-carnitine = O-decanoyl-(R)-carnitine + CoA. It carries out the reaction dodecanoyl-CoA + (R)-carnitine = O-dodecanoyl-R-carnitine + CoA. The enzyme catalyses tetradecanoyl-CoA + (R)-carnitine = O-tetradecanoyl-(R)-carnitine + CoA. It catalyses the reaction (R)-carnitine + octadecanoyl-CoA = O-octadecanoyl-(R)-carnitine + CoA. The catalysed reaction is eicosanoyl-CoA + (R)-carnitine = O-eicosanoyl-(R)-carnitine + CoA. It carries out the reaction (9Z)-tetradecenoyl-CoA + (R)-carnitine = O-(9Z)-tetradecenoyl-(R)-carnitine + CoA. The enzyme catalyses (5Z)-tetradecenoyl-CoA + (R)-carnitine = O-(5Z)-tetradecenoyl-(R)-carnitine + CoA. It catalyses the reaction (R)-carnitine + (9Z)-octadecenoyl-CoA = O-(9Z)-octadecenoyl-(R)-carnitine + CoA. The catalysed reaction is 4,8-dimethylnonanoyl-CoA + (R)-carnitine = O-4,8-dimethylnonanoyl-(R)-carnitine + CoA. Its pathway is lipid metabolism; fatty acid beta-oxidation. Its function is as follows. Involved in the intramitochondrial synthesis of acylcarnitines from accumulated acyl-CoA metabolites. Reconverts acylcarnitines back into the respective acyl-CoA esters that can then undergo beta-oxidation, an essential step for the mitochondrial uptake of long-chain fatty acids and their subsequent beta-oxidation in the mitochondrion. Active with medium (C8-C12) and long-chain (C14-C18) acyl-CoA esters. The sequence is that of Carnitine O-palmitoyltransferase 2, mitochondrial from Mus musculus (Mouse).